Here is a 54-residue protein sequence, read N- to C-terminus: Defensin-like protein (54 aa).

Residue Gln-1 is modified to Pyrrolidone carboxylic acid. 4 cysteine pairs are disulfide-bonded: Cys-4-Cys-52, Cys-16-Cys-37, Cys-22-Cys-47, and Cys-26-Cys-49.

This sequence belongs to the DEFL family. In terms of assembly, monomer.

It localises to the secreted. In terms of biological role, taste-modifying protein; sweet-tasting. It is 2000 sweeter than sucrose on a molar basis. Functionally, has a pH-specific antimicrobial activity against bacteria (B.subtilis, E.coli and S.aureus) and the fungus C.albicans. The chain is Defensin-like protein from Pentadiplandra brazzeana.